Reading from the N-terminus, the 420-residue chain is Gamma-glutamyl phosphate reductase (420 aa).

Belongs to the gamma-glutamyl phosphate reductase family.

It localises to the cytoplasm. The catalysed reaction is L-glutamate 5-semialdehyde + phosphate + NADP(+) = L-glutamyl 5-phosphate + NADPH + H(+). Its pathway is amino-acid biosynthesis; L-proline biosynthesis; L-glutamate 5-semialdehyde from L-glutamate: step 2/2. Its function is as follows. Catalyzes the NADPH-dependent reduction of L-glutamate 5-phosphate into L-glutamate 5-semialdehyde and phosphate. The product spontaneously undergoes cyclization to form 1-pyrroline-5-carboxylate. The polypeptide is Gamma-glutamyl phosphate reductase (Neisseria meningitidis serogroup C (strain 053442)).